The following is a 249-amino-acid chain: Large ribosomal subunit protein uL16m (249 aa).

The protein belongs to the universal ribosomal protein uL16 family. Component of the mitochondrial large ribosomal subunit (mt-LSU). Mature N.crassa 74S mitochondrial ribosomes consist of a small (37S) and a large (54S) subunit. The 37S small subunit contains a 16S ribosomal RNA (16S mt-rRNA) and 32 different proteins. The 54S large subunit contains a 23S rRNA (23S mt-rRNA) and 42 different proteins.

It is found in the mitochondrion. Functionally, component of the mitochondrial ribosome (mitoribosome), a dedicated translation machinery responsible for the synthesis of mitochondrial genome-encoded proteins, including at least some of the essential transmembrane subunits of the mitochondrial respiratory chain. The mitoribosomes are attached to the mitochondrial inner membrane and translation products are cotranslationally integrated into the membrane. This chain is Large ribosomal subunit protein uL16m (mrpl16), found in Neurospora crassa (strain ATCC 24698 / 74-OR23-1A / CBS 708.71 / DSM 1257 / FGSC 987).